Consider the following 878-residue polypeptide: Bifunctional heparan sulfate N-deacetylase/N-sulfotransferase 1 (878 aa).

The Cytoplasmic segment spans residues 1 to 17 (MSLSLKTRRFGRPVRPQ). The tract at residues 1–169 (MSLSLKTRRF…VEYGVGIIGF (169 aa)) is sufficient for localization to Golgi membrane. A helical; Signal-anchor for type II membrane protein membrane pass occupies residues 18–38 (LVLLLLFALCLLSVFISAYYL). Residues 39–878 (YGWKRGLEPS…WLREELQNTR (840 aa)) lie on the Lumenal side of the membrane. Residues 40 to 594 (GWKRGLEPSG…KRHKDIWSKE (555 aa)) form a heparan sulfate N-deacetylase 1 region. Residues asparagine 231, asparagine 347, and asparagine 397 are each glycosylated (N-linked (GlcNAc...) asparagine). The segment at 595-878 (KTCDRFPKLL…WLREELQNTR (284 aa)) is heparan sulfate N-sulfotransferase 1. The active-site For sulfotransferase activity is the lysine 610. 610-614 (KTGTT) provides a ligand contact to adenosine 3',5'-bisphosphate. N-linked (GlcNAc...) asparagine glycosylation occurs at asparagine 663. Serine 708 and tryptophan 813 together coordinate adenosine 3',5'-bisphosphate. Cysteines 814 and 824 form a disulfide. 829-833 (KGRKY) lines the adenosine 3',5'-bisphosphate pocket.

This sequence belongs to the sulfotransferase 1 family. NDST subfamily. Monomer.

The protein resides in the golgi apparatus membrane. The protein localises to the golgi apparatus. It localises to the trans-Golgi network membrane. The catalysed reaction is alpha-D-glucosaminyl-[heparan sulfate](n) + 3'-phosphoadenylyl sulfate = N-sulfo-alpha-D-glucosaminyl-[heparan sulfate](n) + adenosine 3',5'-bisphosphate + 2 H(+). Its pathway is glycan metabolism; heparan sulfate biosynthesis. It functions in the pathway glycan metabolism; heparin biosynthesis. Essential bifunctional enzyme that catalyzes both the N-deacetylation and the N-sulfation of glucosamine (GlcNAc) of the glycosaminoglycan in heparan sulfate. Modifies the GlcNAc-GlcA disaccharide repeating sugar backbone to make N-sulfated heparosan, a prerequisite substrate for later modifications in heparin biosynthesis. Plays a role in determining the extent and pattern of sulfation of heparan sulfate. The chain is Bifunctional heparan sulfate N-deacetylase/N-sulfotransferase 1 (ndst1) from Xenopus laevis (African clawed frog).